The chain runs to 136 residues: Large ribosomal subunit protein uL16 (136 aa).

Belongs to the universal ribosomal protein uL16 family. As to quaternary structure, part of the 50S ribosomal subunit.

Functionally, binds 23S rRNA and is also seen to make contacts with the A and possibly P site tRNAs. This chain is Large ribosomal subunit protein uL16, found in Bradyrhizobium diazoefficiens (strain JCM 10833 / BCRC 13528 / IAM 13628 / NBRC 14792 / USDA 110).